A 665-amino-acid polypeptide reads, in one-letter code: Fructose-1,6-bisphosphatase class 3 (665 aa).

It belongs to the FBPase class 3 family. Requires Mn(2+) as cofactor.

It carries out the reaction beta-D-fructose 1,6-bisphosphate + H2O = beta-D-fructose 6-phosphate + phosphate. The protein operates within carbohydrate biosynthesis; gluconeogenesis. This Alkaliphilus metalliredigens (strain QYMF) protein is Fructose-1,6-bisphosphatase class 3.